The primary structure comprises 596 residues: Ulvan-active sulfatase (596 aa).

Positions 1-27 are cleaved as a signal peptide; it reads MLFLRFKFFNNRLLFVSVLCFVICVSC. The Ca(2+) site is built by glutamate 58, aspartate 59, cysteine 97, aspartate 306, and histidine 307. Cysteine 97 (nucleophile) is an active-site residue. Position 97 is a 3-oxoalanine (Cys) (cysteine 97).

Belongs to the sulfatase family. It depends on Ca(2+) as a cofactor. The conversion to 3-oxoalanine (also known as C-formylglycine, FGly), of a serine or cysteine residue in prokaryotes and of a cysteine residue in eukaryotes, is critical for catalytic activity.

Its subcellular location is the periplasm. Sulfatase involved in ulvan degradation. Ulvan is the main polysaccharide component of the Ulvales (green seaweed) cell wall. It is composed of disaccharide building blocks comprising 3-sulfated rhamnose (Rha3S) linked to D-glucuronic acid (GlcA), L-iduronic acid (IduA), or D-xylose (Xyl). The sulfatase desulfates Xyl2S-Rha3S, product of the degradation of ulvan by endo-acting alpha-1,4-L-rhamnosidase, to Xyl-Rha3S. The chain is Ulvan-active sulfatase from Formosa agariphila (strain DSM 15362 / KCTC 12365 / LMG 23005 / KMM 3901 / M-2Alg 35-1).